The primary structure comprises 941 residues: Gamma-aminobutyric acid type B receptor subunit 2 (941 aa).

Positions 1-41 are cleaved as a signal peptide; that stretch reads MASPRSSGQPGPPPPPPPPPARLLLLLLLPLLLPLAPGAWG. Residues 42 to 483 are Extracellular-facing; sequence WARGAPRPPP…LRKISLPLYS (442 aa). Asn90 carries an N-linked (GlcNAc...) asparagine glycan. 3 cysteine pairs are disulfide-bonded: Cys108-Cys135, Cys237-Cys266, and Cys265-Cys302. Asn298, Asn389, Asn404, and Asn453 each carry an N-linked (GlcNAc...) asparagine glycan. Residues 484-504 form a helical membrane-spanning segment; sequence ILSALTILGMIMASAFLFFNI. Topologically, residues 505-522 are cytoplasmic; the sequence is KNRNQKLIKMSSPYMNNL. Residues 523 to 543 traverse the membrane as a helical segment; that stretch reads IILGGMLSYASIFLFGLDGSF. The Extracellular segment spans residues 544–551; that stretch reads VSEKTFET. Residues 552–572 form a helical membrane-spanning segment; the sequence is LCTVRTWILTVGYTTAFGAMF. At 573 to 597 the chain is on the cytoplasmic side; it reads AKTWRVHAIFKNVKMKKKIIKDQKL. The helical transmembrane segment at 598–618 threads the bilayer; sequence LVIVGGMLLIDLCILICWQAV. Topologically, residues 619–654 are extracellular; the sequence is DPLRRTVEKYSMEPDPAGRDISIRPLLEHCENTHMT. A helical membrane pass occupies residues 655–675; it reads IWLGIVYAYKGLLMLFGCFLA. The Cytoplasmic portion of the chain corresponds to 676 to 691; sequence WETRNVSIPALNDSKY. Residues 692–712 form a helical membrane-spanning segment; the sequence is IGMSVYNVGIMCIIGAAVSFL. Residues 713 to 720 are Extracellular-facing; that stretch reads TRDQPNVQ. The helical transmembrane segment at 721 to 741 threads the bilayer; that stretch reads FCIVALVIIFCSTITLCLVFV. At 742-941 the chain is on the cytoplasmic side; sequence PKLITLRTNP…PSFRVMVSGL (200 aa). The tract at residues 763 to 790 is disordered; it reads TQNQKKEDSKTSTSVTSVNQASTSRLEG. Positions 773 to 787 are enriched in polar residues; that stretch reads TSTSVTSVNQASTSR. Residues Ser776 and Ser779 each carry the phosphoserine modification. Positions 781 to 819 form a coiled coil; that stretch reads NQASTSRLEGLQSENHRLRMKITELDKDLEEVTMQLQDT. Thr819 is subject to Phosphothreonine. Phosphoserine occurs at positions 884, 893, 913, 916, 920, and 924.

Belongs to the G-protein coupled receptor 3 family. GABA-B receptor subfamily. In terms of assembly, heterodimer of GABBR1 and GABBR2. Homodimers may form, but are inactive. Interacts (via C-terminus) with ATF4 (via leucine zipper domain). Highly expressed in brain, especially in cerebral cortex, thalamus, hippocampus, frontal, occipital and temporal lobe, occipital pole and cerebellum, followed by corpus callosum, caudate nucleus, spinal cord, amygdala and medulla. Weakly expressed in heart, testis and skeletal muscle.

The protein resides in the cell membrane. It localises to the postsynaptic cell membrane. Component of a heterodimeric G-protein coupled receptor for GABA, formed by GABBR1 and GABBR2. Within the heterodimeric GABA receptor, only GABBR1 seems to bind agonists, while GABBR2 mediates coupling to G proteins. Ligand binding causes a conformation change that triggers signaling via guanine nucleotide-binding proteins (G proteins) and modulates the activity of down-stream effectors, such as adenylate cyclase. Signaling inhibits adenylate cyclase, stimulates phospholipase A2, activates potassium channels, inactivates voltage-dependent calcium-channels and modulates inositol phospholipid hydrolysis. Plays a critical role in the fine-tuning of inhibitory synaptic transmission. Pre-synaptic GABA receptor inhibits neurotransmitter release by down-regulating high-voltage activated calcium channels, whereas postsynaptic GABA receptor decreases neuronal excitability by activating a prominent inwardly rectifying potassium (Kir) conductance that underlies the late inhibitory postsynaptic potentials. Not only implicated in synaptic inhibition but also in hippocampal long-term potentiation, slow wave sleep, muscle relaxation and antinociception. The polypeptide is Gamma-aminobutyric acid type B receptor subunit 2 (GABBR2) (Homo sapiens (Human)).